The following is a 784-amino-acid chain: Alpha-catulin (784 aa).

The interval 35–247 (IKTKSIEQTL…LLLTASKTYL (213 aa)) is vinculin/alpha-catenin homology 1 (VH1) region. The stretch at 387–414 (ASGLEVTVERLNRRLKDLSKQLQIVAME) forms a coiled coil. Residues 552–696 (PRPGKHGTTQ…MVKSPTVGKT (145 aa)) form a vinculin/alpha-catenin homology 2 (VH2) region region. Residues 737-784 (GSVNGRTGADGERTSRESTVWRRTPSIRRAAPPTSSHLSANNSSSIHI) form a disordered region. Residues 745-756 (ADGERTSRESTV) are compositionally biased toward basic and acidic residues. Positions 771-784 (SSHLSANNSSSIHI) are enriched in low complexity.

The protein belongs to the vinculin/alpha-catenin family. Interacts with slo-1 (via C-terminus); the interaction is required for localization of slo-1 to dense bodies in body wall muscle cells. Interacts (via N-terminus) with dystrophin complex member dyb-1 (via C-terminus); the interaction is required for localization of the dystrophin complex and ctn-1 near dense bodies in muscle cells. Expressed in body wall muscles, vulval muscles, stomatointestinal cells and pharyngeal muscle cells. Expressed in enteric muscles, nerve ring neurons and in the ventral nerve cord.

Its subcellular location is the cytoplasm. Its function is as follows. Required for slo-1 potassium ion channel clustering at presynaptic terminals and in egg-laying muscles; clustering of slo-1 mediates the intoxicating and sedatory effects of ethanol on worms. Required for slo-1 localization to dense bodies in body wall muscle cells. Maintains the localization of the dystrophin complex near muscle cell dense bodies via its interaction with complex member dyb-1 which is required for slo-1 localization in muscle while slo-1 localization in neurons is independent of the dystrophin complex. This chain is Alpha-catulin, found in Caenorhabditis elegans.